The primary structure comprises 49 residues: Large ribosomal subunit protein bL33 (49 aa).

It belongs to the bacterial ribosomal protein bL33 family.

This chain is Large ribosomal subunit protein bL33, found in Pseudothermotoga lettingae (strain ATCC BAA-301 / DSM 14385 / NBRC 107922 / TMO) (Thermotoga lettingae).